A 166-amino-acid polypeptide reads, in one-letter code: Photosystem I assembly protein Ycf3 (166 aa).

TPR repeat units follow at residues 35–68, 72–105, and 120–153; these read AFTY…EIDA, SYML…NPRL, and GEQA…SPTS.

This sequence belongs to the Ycf3 family.

It localises to the plastid. It is found in the chloroplast thylakoid membrane. Its function is as follows. Essential for the assembly of the photosystem I (PSI) complex. May act as a chaperone-like factor to guide the assembly of the PSI subunits. The protein is Photosystem I assembly protein Ycf3 of Bigelowiella natans (Pedinomonas minutissima).